We begin with the raw amino-acid sequence, 154 residues long: 3-dehydroquinate dehydratase (154 aa).

Residue tyrosine 22 is the Proton acceptor of the active site. Substrate contacts are provided by asparagine 73, histidine 79, and aspartate 86. Histidine 99 acts as the Proton donor in catalysis. Residues 100–101 and arginine 110 each bind substrate; that span reads LS.

The protein belongs to the type-II 3-dehydroquinase family. In terms of assembly, homododecamer.

The catalysed reaction is 3-dehydroquinate = 3-dehydroshikimate + H2O. It functions in the pathway metabolic intermediate biosynthesis; chorismate biosynthesis; chorismate from D-erythrose 4-phosphate and phosphoenolpyruvate: step 3/7. Catalyzes a trans-dehydration via an enolate intermediate. The protein is 3-dehydroquinate dehydratase of Carboxydothermus hydrogenoformans (strain ATCC BAA-161 / DSM 6008 / Z-2901).